A 410-amino-acid polypeptide reads, in one-letter code: Arginine deiminase (410 aa).

Residue cysteine 399 is the Amidino-cysteine intermediate of the active site.

Belongs to the arginine deiminase family.

The protein localises to the cytoplasm. It carries out the reaction L-arginine + H2O = L-citrulline + NH4(+). The protein operates within amino-acid degradation; L-arginine degradation via ADI pathway; carbamoyl phosphate from L-arginine: step 1/2. This is Arginine deiminase from Listeria monocytogenes serotype 4a (strain HCC23).